The sequence spans 232 residues: MSVFRSIRDGVVPIHKEGYPFIVAFFVASLILGWIWDPLFWFGLVLTVWCIYFFRDPERVTPMNADWVVSPADGRISFVGLCVPPEELDLGKNEMMRVSVFMDVFSCHINRAPVSGTIESIVYSPGKFVNADLDKASEFNERNGVVIDSKHGKIGVVQIAGLVARRIICWSKEDDSVAAGQRFGMIRFGSRLDVYMPAEIKLRVAVGQTSIAGETVLGSFDSDITTTDFRLN.

S190 functions as the Schiff-base intermediate with substrate; via pyruvic acid in the catalytic mechanism. S190 carries the pyruvic acid (Ser); by autocatalysis modification.

It belongs to the phosphatidylserine decarboxylase family. PSD-A subfamily. As to quaternary structure, heterodimer of a large membrane-associated beta subunit and a small pyruvoyl-containing alpha subunit. The cofactor is pyruvate. Is synthesized initially as an inactive proenzyme. Formation of the active enzyme involves a self-maturation process in which the active site pyruvoyl group is generated from an internal serine residue via an autocatalytic post-translational modification. Two non-identical subunits are generated from the proenzyme in this reaction, and the pyruvate is formed at the N-terminus of the alpha chain, which is derived from the carboxyl end of the proenzyme. The post-translation cleavage follows an unusual pathway, termed non-hydrolytic serinolysis, in which the side chain hydroxyl group of the serine supplies its oxygen atom to form the C-terminus of the beta chain, while the remainder of the serine residue undergoes an oxidative deamination to produce ammonia and the pyruvoyl prosthetic group on the alpha chain.

It localises to the cell membrane. The enzyme catalyses a 1,2-diacyl-sn-glycero-3-phospho-L-serine + H(+) = a 1,2-diacyl-sn-glycero-3-phosphoethanolamine + CO2. The protein operates within phospholipid metabolism; phosphatidylethanolamine biosynthesis; phosphatidylethanolamine from CDP-diacylglycerol: step 2/2. Catalyzes the formation of phosphatidylethanolamine (PtdEtn) from phosphatidylserine (PtdSer). The chain is Phosphatidylserine decarboxylase proenzyme from Bartonella bacilliformis (strain ATCC 35685 / KC583 / Herrer 020/F12,63).